Reading from the N-terminus, the 204-residue chain is Small ribosomal subunit protein uS4 (204 aa).

The disordered stretch occupies residues Ser-22–Pro-43. The 61-residue stretch at Thr-94–Leu-154 folds into the S4 RNA-binding domain.

This sequence belongs to the universal ribosomal protein uS4 family. In terms of assembly, part of the 30S ribosomal subunit. Contacts protein S5. The interaction surface between S4 and S5 is involved in control of translational fidelity.

In terms of biological role, one of the primary rRNA binding proteins, it binds directly to 16S rRNA where it nucleates assembly of the body of the 30S subunit. With S5 and S12 plays an important role in translational accuracy. The polypeptide is Small ribosomal subunit protein uS4 (Oenococcus oeni (strain ATCC BAA-331 / PSU-1)).